The sequence spans 159 residues: Ribosomal RNA large subunit methyltransferase H (159 aa).

S-adenosyl-L-methionine is bound by residues Leu-76, Gly-108, and Phe-127 to Leu-132.

It belongs to the RNA methyltransferase RlmH family. Homodimer.

It is found in the cytoplasm. It carries out the reaction pseudouridine(1915) in 23S rRNA + S-adenosyl-L-methionine = N(3)-methylpseudouridine(1915) in 23S rRNA + S-adenosyl-L-homocysteine + H(+). In terms of biological role, specifically methylates the pseudouridine at position 1915 (m3Psi1915) in 23S rRNA. This Streptococcus equi subsp. zooepidemicus (strain H70) protein is Ribosomal RNA large subunit methyltransferase H.